The following is a 311-amino-acid chain: Malate dehydrogenase (311 aa).

NAD(+) contacts are provided by residues 7 to 13 and aspartate 34; that span reads GAAGGIG. 2 residues coordinate substrate: arginine 81 and arginine 87. NAD(+) contacts are provided by residues asparagine 94 and 117–119; that span reads ITN. Residues asparagine 119 and arginine 153 each contribute to the substrate site. Catalysis depends on histidine 177, which acts as the Proton acceptor. Methionine 227 lines the NAD(+) pocket.

The protein belongs to the LDH/MDH superfamily. MDH type 1 family. Homodimer.

It catalyses the reaction (S)-malate + NAD(+) = oxaloacetate + NADH + H(+). In terms of biological role, catalyzes the reversible oxidation of malate to oxaloacetate. This Aliivibrio salmonicida (strain LFI1238) (Vibrio salmonicida (strain LFI1238)) protein is Malate dehydrogenase.